The sequence spans 286 residues: tRNA pseudouridine synthase B (286 aa).

Residue Asp40 is the Nucleophile of the active site.

Belongs to the pseudouridine synthase TruB family. Type 1 subfamily.

The catalysed reaction is uridine(55) in tRNA = pseudouridine(55) in tRNA. Its function is as follows. Responsible for synthesis of pseudouridine from uracil-55 in the psi GC loop of transfer RNAs. The polypeptide is tRNA pseudouridine synthase B (Mesoplasma florum (strain ATCC 33453 / NBRC 100688 / NCTC 11704 / L1) (Acholeplasma florum)).